The sequence spans 95 residues: Small ribosomal subunit protein bS20 (95 aa).

The protein belongs to the bacterial ribosomal protein bS20 family.

Binds directly to 16S ribosomal RNA. This Ehrlichia canis (strain Jake) protein is Small ribosomal subunit protein bS20.